The sequence spans 132 residues: Cytochrome c-554 (132 aa).

Positions Met1 to Ala24 are cleaved as a signal peptide. Positions Gly26–Gly126 constitute a Cytochrome c domain. 4 residues coordinate heme c: Cys38, Cys41, His42, and Met104.

Binds 1 heme c group covalently per subunit.

The protein localises to the periplasm. This is Cytochrome c-554 from Methylosinus trichosporium.